The primary structure comprises 155 residues: Ribonuclease 2B (155 aa).

A signal peptide spans Met1–Cys25. The active-site Proton acceptor is His38. Intrachain disulfides connect Cys47–Cys106, Cys61–Cys118, Cys79–Cys133, and Cys86–Cys94. Lys62 to Thr66 provides a ligand contact to substrate. N-linked (GlcNAc...) asparagine glycosylation occurs at Asn114. His150 functions as the Proton donor in the catalytic mechanism.

The protein belongs to the pancreatic ribonuclease family.

It catalyses the reaction an [RNA] containing cytidine + H2O = an [RNA]-3'-cytidine-3'-phosphate + a 5'-hydroxy-ribonucleotide-3'-[RNA].. It carries out the reaction an [RNA] containing uridine + H2O = an [RNA]-3'-uridine-3'-phosphate + a 5'-hydroxy-ribonucleotide-3'-[RNA].. In terms of biological role, this is a non-secretory ribonuclease. It is a pyrimidine specific nuclease with a slight preference for U. Cytotoxin and helminthotoxin. Possesses a wide variety of biological activities. The protein is Ribonuclease 2B of Mus musculus (Mouse).